The primary structure comprises 490 residues: UDP-N-acetylmuramoyl-L-alanyl-D-glutamate--2,6-diaminopimelate ligase (490 aa).

Residues Leu22, Ser24, and 39–41 each bind UDP-N-acetyl-alpha-D-muramoyl-L-alanyl-D-glutamate; that span reads HQT. 111-117 serves as a coordination point for ATP; the sequence is GTNGKTT. UDP-N-acetyl-alpha-D-muramoyl-L-alanyl-D-glutamate is bound by residues Asn152, 153-154, Ser180, Gln186, and Arg188; that span reads TT. Residue Lys220 is modified to N6-carboxylysine. Meso-2,6-diaminopimelate is bound by residues Arg385, 409-412, Gly460, and Glu464; that span reads DNPR. A Meso-diaminopimelate recognition motif motif is present at residues 409 to 412; sequence DNPR.

This sequence belongs to the MurCDEF family. MurE subfamily. Requires Mg(2+) as cofactor. Carboxylation is probably crucial for Mg(2+) binding and, consequently, for the gamma-phosphate positioning of ATP.

The protein resides in the cytoplasm. It catalyses the reaction UDP-N-acetyl-alpha-D-muramoyl-L-alanyl-D-glutamate + meso-2,6-diaminopimelate + ATP = UDP-N-acetyl-alpha-D-muramoyl-L-alanyl-gamma-D-glutamyl-meso-2,6-diaminopimelate + ADP + phosphate + H(+). It functions in the pathway cell wall biogenesis; peptidoglycan biosynthesis. Catalyzes the addition of meso-diaminopimelic acid to the nucleotide precursor UDP-N-acetylmuramoyl-L-alanyl-D-glutamate (UMAG) in the biosynthesis of bacterial cell-wall peptidoglycan. The protein is UDP-N-acetylmuramoyl-L-alanyl-D-glutamate--2,6-diaminopimelate ligase of Yersinia pestis.